The following is a 427-amino-acid chain: MSVSFENKETNRGVLTFTISQDQIKPELDRVFKSVKKSLNVPGFRKGHLPRPIFDKKFGEESLYQDVMNALLPNAYEAAVKEAGLEVVAQPKIDVTSMEKGQDWVIAAEVVTKPEVKLGDYKNLEVSVDVEKEVTDADVEERIERERNNLAELVIKEAAAENGDTVVIDFVGSIDGVEFDGGKGENFSLGLGSGQFIPGFEDQLVGHSAGETVDVIVTFPEDYQAEDLAGKEAKFVTTIHEVKAKEVPALDDELAKDIDEEVETLADLKEKYRKELAAAKEEAYKDAVEGAAIDTAVENAEIVELPEEMIHEEVHRSVNEFLGNLQRQGINPDMYFQITGTTQEDLHNQYQAEAESRTKTNLVIEAVAKAEGFDASEEEIQKEVEQLAADYNMEVAQVQNLLSADMLKHDITIKKAVELITSTATVK.

The region spanning 163–248 is the PPIase FKBP-type domain; the sequence is GDTVVIDFVG…IHEVKAKEVP (86 aa).

The protein belongs to the FKBP-type PPIase family. Tig subfamily.

The protein localises to the cytoplasm. It carries out the reaction [protein]-peptidylproline (omega=180) = [protein]-peptidylproline (omega=0). In terms of biological role, involved in protein export. Acts as a chaperone by maintaining the newly synthesized protein in an open conformation. Functions as a peptidyl-prolyl cis-trans isomerase. The protein is Trigger factor of Streptococcus pneumoniae (strain CGSP14).